The primary structure comprises 427 residues: tRNA(Ile)-lysidine synthase (427 aa).

An ATP-binding site is contributed by 25–30 (SGGLDS).

This sequence belongs to the tRNA(Ile)-lysidine synthase family.

The protein localises to the cytoplasm. It catalyses the reaction cytidine(34) in tRNA(Ile2) + L-lysine + ATP = lysidine(34) in tRNA(Ile2) + AMP + diphosphate + H(+). Ligates lysine onto the cytidine present at position 34 of the AUA codon-specific tRNA(Ile) that contains the anticodon CAU, in an ATP-dependent manner. Cytidine is converted to lysidine, thus changing the amino acid specificity of the tRNA from methionine to isoleucine. The polypeptide is tRNA(Ile)-lysidine synthase (Histophilus somni (strain 129Pt) (Haemophilus somnus)).